We begin with the raw amino-acid sequence, 270 residues long: Phospholipase A and acyltransferase 5 (270 aa).

Disordered regions lie at residues 1 to 54 (MGLS…SASS) and 70 to 122 (RRLE…NPRP). Polar residues-rich tracts occupy residues 24–54 (TQISKTSSTESSDTQSATGQSTVPHSDSASS) and 100–116 (IPTSNSEIESTQKNQAV). The 114-residue stretch at 127–240 (LIEIFRIGYE…LRYGVPRSQQ (114 aa)) folds into the LRAT domain. Active-site residues include His137 and His149. The Acyl-thioester intermediate role is filled by Cys224.

This sequence belongs to the H-rev107 family. As to expression, isoform 4 shows highest expression level in testis.

The protein resides in the cytoplasm. It is found in the cytosol. It carries out the reaction a 1,2-diacyl-sn-glycero-3-phosphocholine + H2O = a 1-acyl-sn-glycero-3-phosphocholine + a fatty acid + H(+). It catalyses the reaction a 1,2-diacyl-sn-glycero-3-phosphocholine + H2O = a 2-acyl-sn-glycero-3-phosphocholine + a fatty acid + H(+). The catalysed reaction is 1-hexadecanoyl-2-(5Z,8Z,11Z,14Z-eicosatetraenoyl)-sn-glycero-3-phosphocholine + 1,2-di-(9Z-octadecenoyl)-sn-glycero-3-phosphoethanolamine = N-(5Z,8Z,11Z,14Z-eicosatetraenoyl)-1,2-di-(9Z-octadecenoyl)-sn-glycero-3-phosphoethanolamine + 1-hexadecanoyl-sn-glycero-3-phosphocholine + H(+). The enzyme catalyses 1,2-di-(9Z-octadecenoyl)-sn-glycero-3-phosphoethanolamine + 1,2-dihexadecanoyl-sn-glycero-3-phosphocholine = N-hexadecanoyl-1,2-di-(9Z-octadecenoyl)-sn-glycero-3-phosphoethanolamine + 1-hexadecanoyl-sn-glycero-3-phosphocholine + H(+). It carries out the reaction 1,2-di-(9Z-octadecenoyl)-sn-glycero-3-phosphoethanolamine + 1,2-dihexadecanoyl-sn-glycero-3-phosphocholine = N-hexadecanoyl-1,2-di-(9Z-octadecenoyl)-sn-glycero-3-phosphoethanolamine + 2-hexadecanoyl-sn-glycero-3-phosphocholine + H(+). It catalyses the reaction a 1,2-diacyl-sn-glycero-3-phosphoethanolamine + a 1,2-diacyl-sn-glycero-3-phosphocholine = an N-acyl-1,2-diacyl-sn-glycero-3-phosphoethanolamine + a 1-acyl-sn-glycero-3-phosphocholine + H(+). The catalysed reaction is a 1,2-diacyl-sn-glycero-3-phosphoethanolamine + a 1,2-diacyl-sn-glycero-3-phosphocholine = an N-acyl-1,2-diacyl-sn-glycero-3-phosphoethanolamine + a 2-acyl-sn-glycero-3-phosphocholine + H(+). The enzyme catalyses 1-hexadecanoyl-2-(9Z-octadecenoyl)-sn-glycero-3-phosphocholine + 1,2-di-(9Z-octadecenoyl)-sn-glycero-3-phosphoethanolamine = N,1,2-tri-(9Z-octadecenoyl)-sn-glycero-3-phosphoethanolamine + 1-hexadecanoyl-sn-glycero-3-phosphocholine + H(+). In terms of biological role, exhibits both phospholipase A1/2 and acyltransferase activities. Shows phospholipase A1 (PLA1) and A2 (PLA2) activity, catalyzing the calcium-independent release of fatty acids from the sn-1 or sn-2 position of glycerophospholipids. Shows N-acyltransferase activity, catalyzing the calcium-independent transfer of a fatty acyl group at the sn-1 position of phosphatidylcholine (PC) and other glycerophospholipids to the primary amine of phosphatidylethanolamine (PE), forming N-acylphosphatidylethanolamine (NAPE), which serves as precursor for N-acylethanolamines (NAEs). This Mus musculus (Mouse) protein is Phospholipase A and acyltransferase 5.